The chain runs to 142 residues: Hemoglobin subunit alpha-1 (142 aa).

The region spanning 2–142 (VLSADDKSNV…VSTVLTSKYR (141 aa)) is the Globin domain. Residue His-59 coordinates O2. His-88 is a binding site for heme b.

Belongs to the globin family. Heterotetramer of two alpha chains and two beta chains. As to expression, red blood cells.

Functionally, involved in oxygen transport from the lung to the various peripheral tissues. In terms of biological role, hemopressin acts as an antagonist peptide of the cannabinoid receptor CNR1. Hemopressin-binding efficiently blocks cannabinoid receptor CNR1 and subsequent signaling. This chain is Hemoglobin subunit alpha-1 (HBA1), found in Equus quagga burchellii (Burchell's zebra).